The chain runs to 417 residues: MAALLVPGGGAAPGLVWRRRRAAVQCAAASPSSPDPSWRTNVVSDRVSVEPSPRTIHECEADVVSGNPPAAPAAPAKAKAPPGTPVVKPLRLTSRPRRNRKSAALRDAFQETTLTPANFILPLFIHEGEEDSPIGAMPGCSRLGWRHGLIDEVYKARDVGVNSVVLFPKIPDALKSSTGDEAYNPDGLVPRAIRTLKDKFPDLVIYTDVALDPYSSDGHDGIVREDGVIMNDETVHQLCKQAVAQAEAGADVVSPSDMMDGRVGAIRTALDEAGYYHVSIMAYTAKYASAFYEPFREELDSNPRFGDKKTYQMNPENYREALLEVHADESEGADILMVKPAMPYLHVIRLLRDTSALPISAYQVSGEYSMIKAAASQGMLDEKKAILESLLCIKRAGADVILTYAALQAARWLCGEK.

The N-terminal 40 residues, 1-40 (MAALLVPGGGAAPGLVWRRRRAAVQCAAASPSSPDPSWRT), are a transit peptide targeting the chloroplast. Residues 63–92 (VVSGNPPAAPAAPAKAKAPPGTPVVKPLRL) are disordered. The active-site Schiff-base intermediate with substrate is Lys-286. 5-aminolevulinate contacts are provided by Arg-296 and Lys-308. Position 324 (Glu-324) interacts with Mg(2+). Lys-339 acts as the Schiff-base intermediate with substrate in catalysis. Positions 365 and 404 each coordinate 5-aminolevulinate.

The protein belongs to the ALAD family. In terms of assembly, homooctamer. The cofactor is Mg(2+).

It is found in the plastid. It localises to the chloroplast. It catalyses the reaction 2 5-aminolevulinate = porphobilinogen + 2 H2O + H(+). Its pathway is porphyrin-containing compound metabolism; protoporphyrin-IX biosynthesis; coproporphyrinogen-III from 5-aminolevulinate: step 1/4. Its function is as follows. Catalyzes an early step in the biosynthesis of tetrapyrroles. Binds two molecules of 5-aminolevulinate per subunit, each at a distinct site, and catalyzes their condensation to form porphobilinogen. The chain is Delta-aminolevulinic acid dehydratase, chloroplastic (HEMB) from Selaginella martensii (Martens's spike moss).